The sequence spans 117 residues: Spanin, inner membrane subunit (117 aa).

The Cytoplasmic portion of the chain corresponds to M1–H2. A helical; Signal-anchor for type II membrane protein transmembrane segment spans residues V3–I23. Residues L24 to K93 adopt a coiled-coil conformation. Over L24–K117 the chain is Periplasmic.

In terms of assembly, interacts (via C-terminus) with the spanin outer lipoprotein subunit (via C-terminus). Part of the spanin complex which spans the entire periplasmic space. The spanin complex is composed of spanin inner membrane subunit and spanin outer membrane subunit.

It localises to the host cell inner membrane. Its function is as follows. Component of the spanin complex that disrupts the host outer membrane and participates in cell lysis during virus exit. The spanin complex conducts the final step in host lysis by disrupting the outer membrane after holin and endolysin action have permeabilized the inner membrane and degraded the host peptidoglycans. Host outer membrane disruption is possibly due to local fusion between the inner and outer membrane performed by the spanin complex. The protein is Spanin, inner membrane subunit (y13K) of Enterobacteria phage T4 (Bacteriophage T4).